The following is a 56-amino-acid chain: Large ribosomal subunit protein bL32 (56 aa).

The span at 1–16 (MAVQKSKKSRAARGMR) shows a compositional bias: basic residues. Residues 1–22 (MAVQKSKKSRAARGMRRSHDAL) form a disordered region.

Belongs to the bacterial ribosomal protein bL32 family.

The chain is Large ribosomal subunit protein bL32 from Photobacterium profundum (strain SS9).